The following is a 550-amino-acid chain: Glucose-6-phosphate isomerase (550 aa).

Residues 163–164 (GS), 214–219 (SKTFTT), Q358, E362, H393, and K515 each bind D-glucose 6-phosphate. Residue E362 is the Proton donor of the active site. Active-site residues include H393 and K515.

It belongs to the GPI family. Homodimer.

Its subcellular location is the cytoplasm. The enzyme catalyses alpha-D-glucose 6-phosphate = beta-D-fructose 6-phosphate. The protein operates within carbohydrate degradation; glycolysis; D-glyceraldehyde 3-phosphate and glycerone phosphate from D-glucose: step 2/4. In terms of biological role, in the cytoplasm, catalyzes the conversion of glucose-6-phosphate to fructose-6-phosphate, the second step in glycolysis, and the reverse reaction during gluconeogenesis. This is Glucose-6-phosphate isomerase (PGI1) from Candida albicans (strain SC5314 / ATCC MYA-2876) (Yeast).